Consider the following 254-residue polypeptide: Imidazole glycerol phosphate synthase subunit HisF (254 aa).

Residues Asp-13 and Asp-132 contribute to the active site.

The protein belongs to the HisA/HisF family. As to quaternary structure, heterodimer of HisH and HisF.

The protein localises to the cytoplasm. The enzyme catalyses 5-[(5-phospho-1-deoxy-D-ribulos-1-ylimino)methylamino]-1-(5-phospho-beta-D-ribosyl)imidazole-4-carboxamide + L-glutamine = D-erythro-1-(imidazol-4-yl)glycerol 3-phosphate + 5-amino-1-(5-phospho-beta-D-ribosyl)imidazole-4-carboxamide + L-glutamate + H(+). It functions in the pathway amino-acid biosynthesis; L-histidine biosynthesis; L-histidine from 5-phospho-alpha-D-ribose 1-diphosphate: step 5/9. Functionally, IGPS catalyzes the conversion of PRFAR and glutamine to IGP, AICAR and glutamate. The HisF subunit catalyzes the cyclization activity that produces IGP and AICAR from PRFAR using the ammonia provided by the HisH subunit. The chain is Imidazole glycerol phosphate synthase subunit HisF from Nautilia profundicola (strain ATCC BAA-1463 / DSM 18972 / AmH).